Consider the following 78-residue polypeptide: Translational regulator CsrA (78 aa).

This sequence belongs to the CsrA/RsmA family. Homodimer; the beta-strands of each monomer intercalate to form a hydrophobic core, while the alpha-helices form wings that extend away from the core.

The protein resides in the cytoplasm. A translational regulator that binds mRNA to regulate translation initiation and/or mRNA stability. Usually binds in the 5'-UTR at or near the Shine-Dalgarno sequence preventing ribosome-binding, thus repressing translation. Its main target seems to be the major flagellin gene, while its function is anatagonized by FliW. In Natranaerobius thermophilus (strain ATCC BAA-1301 / DSM 18059 / JW/NM-WN-LF), this protein is Translational regulator CsrA.